We begin with the raw amino-acid sequence, 522 residues long: 2-isopropylmalate synthase (522 aa).

Positions 5–267 constitute a Pyruvate carboxyltransferase domain; sequence VIIFDTTLRD…ETGINAKEIH (263 aa). Residues Asp-14, His-202, His-204, and Asn-238 each coordinate Mn(2+). Residues 392–522 are regulatory domain; sequence QLQQLVVQSD…MQKNRELGGV (131 aa).

The protein belongs to the alpha-IPM synthase/homocitrate synthase family. LeuA type 1 subfamily. In terms of assembly, homodimer. The cofactor is Mn(2+).

The protein localises to the cytoplasm. It carries out the reaction 3-methyl-2-oxobutanoate + acetyl-CoA + H2O = (2S)-2-isopropylmalate + CoA + H(+). It functions in the pathway amino-acid biosynthesis; L-leucine biosynthesis; L-leucine from 3-methyl-2-oxobutanoate: step 1/4. Functionally, catalyzes the condensation of the acetyl group of acetyl-CoA with 3-methyl-2-oxobutanoate (2-ketoisovalerate) to form 3-carboxy-3-hydroxy-4-methylpentanoate (2-isopropylmalate). The protein is 2-isopropylmalate synthase of Shewanella putrefaciens (strain CN-32 / ATCC BAA-453).